The sequence spans 85 residues: Large ribosomal subunit protein bL31B (85 aa).

It belongs to the bacterial ribosomal protein bL31 family. Type B subfamily. Part of the 50S ribosomal subunit.

This Vibrio cholerae serotype O1 (strain ATCC 39541 / Classical Ogawa 395 / O395) protein is Large ribosomal subunit protein bL31B.